Consider the following 210-residue polypeptide: Imidazoleglycerol-phosphate dehydratase (210 aa).

Residues 185-210 (PRRGGSIPSSKGVLEQAGDNNTEKSK) form a disordered region.

It belongs to the imidazoleglycerol-phosphate dehydratase family.

Its subcellular location is the cytoplasm. The enzyme catalyses D-erythro-1-(imidazol-4-yl)glycerol 3-phosphate = 3-(imidazol-4-yl)-2-oxopropyl phosphate + H2O. The protein operates within amino-acid biosynthesis; L-histidine biosynthesis; L-histidine from 5-phospho-alpha-D-ribose 1-diphosphate: step 6/9. This is Imidazoleglycerol-phosphate dehydratase from Prochlorococcus marinus (strain SARG / CCMP1375 / SS120).